We begin with the raw amino-acid sequence, 196 residues long: Pyridoxal 5'-phosphate synthase subunit PdxT (196 aa).

46 to 48 provides a ligand contact to L-glutamine; that stretch reads GES. The active-site Nucleophile is Cys-78. Residues Arg-110 and 138–139 each bind L-glutamine; that span reads IR. Active-site charge relay system residues include His-174 and Glu-176.

This sequence belongs to the glutaminase PdxT/SNO family. In terms of assembly, in the presence of PdxS, forms a dodecamer of heterodimers. Only shows activity in the heterodimer.

The enzyme catalyses aldehydo-D-ribose 5-phosphate + D-glyceraldehyde 3-phosphate + L-glutamine = pyridoxal 5'-phosphate + L-glutamate + phosphate + 3 H2O + H(+). It catalyses the reaction L-glutamine + H2O = L-glutamate + NH4(+). Its pathway is cofactor biosynthesis; pyridoxal 5'-phosphate biosynthesis. Its function is as follows. Catalyzes the hydrolysis of glutamine to glutamate and ammonia as part of the biosynthesis of pyridoxal 5'-phosphate. The resulting ammonia molecule is channeled to the active site of PdxS. This Deinococcus radiodurans (strain ATCC 13939 / DSM 20539 / JCM 16871 / CCUG 27074 / LMG 4051 / NBRC 15346 / NCIMB 9279 / VKM B-1422 / R1) protein is Pyridoxal 5'-phosphate synthase subunit PdxT.